Consider the following 341-residue polypeptide: KRR1 small subunit processome component homolog (341 aa).

Residues 126–194 (DIIKIGNLVH…VRDIVLETMN (69 aa)) enclose the KH domain. Residues 230 to 244 (KNKNISKRKQPKSRK) are compositionally biased toward basic residues. A disordered region spans residues 230 to 327 (KNKNISKRKQ…RPSEASKVDV (98 aa)). Residues 271–341 (FLNKEQKQAK…AKLLKANKQK (71 aa)) are a coiled coil. Composition is skewed to basic and acidic residues over residues 272 to 303 (LNKE…RNKD) and 313 to 327 (EQNR…KVDV).

This sequence belongs to the KRR1 family. In terms of assembly, monomer. Component of the ribosomal small subunit (SSU) processome.

It is found in the nucleus. Its subcellular location is the nucleolus. Its function is as follows. Required for 40S ribosome biogenesis. Involved in nucleolar processing of pre-18S ribosomal RNA and ribosome assembly. Binds to RNA. Required for female germline development, cell viability during eye development and for survival of dividing cells and epithelial cells during early wing disk development. The polypeptide is KRR1 small subunit processome component homolog (Drosophila grimshawi (Hawaiian fruit fly)).